The chain runs to 305 residues: uncharacterized protein (305 aa).

This is an uncharacterized protein from Acanthamoeba polyphaga mimivirus (APMV).